Consider the following 145-residue polypeptide: 3-dehydroquinate dehydratase (145 aa).

The Proton acceptor role is filled by Tyr-23. Substrate contacts are provided by Asn-75, His-81, and Asp-88. Residue His-101 is the Proton donor of the active site. Residues 102–103 (LS) and Arg-112 contribute to the substrate site.

Belongs to the type-II 3-dehydroquinase family. As to quaternary structure, homododecamer.

It catalyses the reaction 3-dehydroquinate = 3-dehydroshikimate + H2O. It functions in the pathway metabolic intermediate biosynthesis; chorismate biosynthesis; chorismate from D-erythrose 4-phosphate and phosphoenolpyruvate: step 3/7. Functionally, catalyzes a trans-dehydration via an enolate intermediate. The sequence is that of 3-dehydroquinate dehydratase from Legionella pneumophila (strain Lens).